The chain runs to 2102 residues: Probable serine/threonine-protein kinase DDB_G0272282 (2102 aa).

One can recognise a PX domain in the interval 1 to 118; it reads MKYQLSILGD…NWLVPQNEPA (118 aa). A PH domain is found at 124–222; it reads NPDKSGYLIK…WIKAIELSQQ (99 aa). Residues 225-240 show a composition bias toward basic and acidic residues; the sequence is QDQEQYRKQEEEERQK. Disordered stretches follow at residues 225 to 289, 302 to 390, 426 to 558, 574 to 665, 685 to 768, 804 to 842, 1029 to 1051, 1106 to 1224, and 1476 to 1514; these read QDQE…SDGS, GPNN…SDLN, EQPG…SASP, SNLP…PLPN, NNNS…NNSL, KKKE…GTLR, QQQQ…SSVN, GTPT…PQPQ, and SSKV…SSLT. Composition is skewed to low complexity over residues 256–281 and 304–327; these read STLT…LPSS and NNSN…NNHN. Basic residues predominate over residues 328–348; the sequence is HYNHHNNNHNNSHHHHHHHNG. Low complexity-rich tracts occupy residues 353–376 and 426–437; these read SSQV…STSL and EQPGSYQQPQHQ. Over residues 438–450 the composition is skewed to gly residues; it reads QGGGGGGGGGGGN. The span at 466–484 shows a compositional bias: low complexity; that stretch reads SNLSSRSNSNSSGSSSGSG. Over residues 485–501 the composition is skewed to gly residues; that stretch reads SSSGSGPIGSGGVGGGL. 2 stretches are compositionally biased toward low complexity: residues 535-558 and 587-626; these read SNSS…SASP and NANN…NNGN. The segment covering 627-659 has biased composition (polar residues); that stretch reads TASGSSCNTTPNLLPAPTNVSPIQNRARSSPMT. Residues 804–824 are compositionally biased toward basic and acidic residues; the sequence is KKKEKDKEKEKDKEKEKEKEI. Over residues 827–841 the composition is skewed to polar residues; that stretch reads NISTSTTPNKKNGTL. A compositionally biased stretch (polar residues) spans 1106–1118; that stretch reads GTPTTTSGDNTPL. 3 stretches are compositionally biased toward low complexity: residues 1119–1182, 1196–1221, and 1476–1492; these read TNTA…NSSI, EQQQ…QQQP, and SSKV…SPIL. Pro residues predominate over residues 1493–1507; sequence SSPPPPMKQPPPQVI. A Protein kinase domain is found at 1527-1851; the sequence is FEIIKPISRG…AYEVKTHPFF (325 aa). Residues 1533 to 1541 and Lys-1556 contribute to the ATP site; that span reads ISRGAFGRV. The active-site Proton acceptor is the Asp-1650. Low complexity-rich tracts occupy residues 1687-1729, 1902-1999, and 2006-2052; these read NTNT…SQTN, SQPQ…NINN, and NNNS…QINN. 2 disordered regions span residues 1687-1741 and 1902-2070; these read NTNT…KNTL and SQPQ…SKIE. In terms of domain architecture, AGC-kinase C-terminal spans 1852–1911; sequence ANVNWDTLIDQEMDNIFLPKPENNYDTDYFWDRQSMYDDEAEDDFLTINQSQPQHQSQHQ.

It belongs to the protein kinase superfamily. AGC Ser/Thr protein kinase family.

The enzyme catalyses L-seryl-[protein] + ATP = O-phospho-L-seryl-[protein] + ADP + H(+). The catalysed reaction is L-threonyl-[protein] + ATP = O-phospho-L-threonyl-[protein] + ADP + H(+). The protein is Probable serine/threonine-protein kinase DDB_G0272282 of Dictyostelium discoideum (Social amoeba).